Reading from the N-terminus, the 667-residue chain is mRNA cap guanine-N(7) methyltransferase (667 aa).

Positions 1–19 (MYDPARDSWEERDGDEARS) are enriched in basic and acidic residues. The disordered stretch occupies residues 1–272 (MYDPARDSWE…RRRQEERERA (272 aa)). Over residues 33-52 (FSSSEQIYGASGENNNTTDL) the composition is skewed to polar residues. A compositionally biased stretch (low complexity) spans 72-87 (SPPAQSTTQTPPSIST). A compositionally biased stretch (polar residues) spans 88–128 (HVQSPVNPAAQEASNTQSLTSAAQNQSNKSTTTMDNTSGSA). Residues 132–142 (PRADPSDKSNR) show a composition bias toward basic and acidic residues. Positions 147–156 (ASPTDQNGSQ) are enriched in polar residues. Residues 256-272 (LVDRETLRRRQEERERA) show a composition bias toward basic and acidic residues. An mRNA cap 0 methyltransferase domain is found at 309-667 (SKIKGLRSFN…FYHAFCFYKV (359 aa)). 318-319 (NN) contributes to the mRNA binding site. Residues lysine 322, glycine 365, aspartate 389, aspartate 427, 470 to 472 (MFT), and tyrosine 475 each bind S-adenosyl-L-methionine. Over residues 521–535 (KKERQSQAKKEKTDE) the composition is skewed to basic and acidic residues. A disordered region spans residues 521-547 (KKERQSQAKKEKTDEAPEDGEVEEDDG). A compositionally biased stretch (acidic residues) spans 536-547 (APEDGEVEEDDG).

This sequence belongs to the class I-like SAM-binding methyltransferase superfamily. mRNA cap 0 methyltransferase family.

Its subcellular location is the nucleus. The catalysed reaction is a 5'-end (5'-triphosphoguanosine)-ribonucleoside in mRNA + S-adenosyl-L-methionine = a 5'-end (N(7)-methyl 5'-triphosphoguanosine)-ribonucleoside in mRNA + S-adenosyl-L-homocysteine. Its function is as follows. Responsible for methylating the 5'-cap structure of mRNAs. In Neosartorya fischeri (strain ATCC 1020 / DSM 3700 / CBS 544.65 / FGSC A1164 / JCM 1740 / NRRL 181 / WB 181) (Aspergillus fischerianus), this protein is mRNA cap guanine-N(7) methyltransferase (abd1).